The following is a 582-amino-acid chain: Leucine-rich repeat transmembrane neuronal protein 3 (582 aa).

The signal sequence occupies residues 1-30 (MGFNVIRLLRGSAVAVVLAPTVLLTMLSSA). One can recognise an LRRNT domain in the interval 31-61 (ERGCPKGCRCEGKMVYCESQKLQEIPSSISA). Residues 31–420 (ERGCPKGCRC…VDTEHISFHK (390 aa)) lie on the Extracellular side of the membrane. LRR repeat units lie at residues 63–83 (CLGL…QFKG), 86–107 (QLTW…AFNG), 110–131 (RLKE…TFRP), 134–155 (NLRN…QFRG), 158–179 (KLLS…IFQD), 182–203 (NLEL…VFAG), 206–226 (RLKE…ALFP), 230–251 (SLQN…MSWT), 254–275 (SLQR…SVFQ), and 279–300 (NLQR…ILDS). N126 is a glycosylation site (N-linked (GlcNAc...) asparagine). The region spanning 312–363 (NIWECSRNICSLVNWLRSFKGLRENTIICASPKELQGVNVIDAVKNYSICGK) is the LRRCT domain. The N-linked (GlcNAc...) asparagine glycan is linked to N357. A disordered region spans residues 378–410 (KPTFKPKLPRPKHESKPPLPPTVGATEPSPETD). The helical transmembrane segment at 421–441 (IIAGSVALFLSVLVILLVMYV) threads the bilayer. Residues 442–582 (SWKRYPASMK…RISDHKPQLA (141 aa)) lie on the Cytoplasmic side of the membrane.

The protein belongs to the LRRTM family. As to expression, expressed in neuronal tissues.

It localises to the cell membrane. The protein resides in the postsynaptic cell membrane. May play a role in the development and maintenance of the vertebrate nervous system. Exhibits a limited synaptogenic activity in vitro, restricted to excitatory presynaptic differentiation. In Mus musculus (Mouse), this protein is Leucine-rich repeat transmembrane neuronal protein 3 (Lrrtm3).